The sequence spans 473 residues: Photosystem II CP43 reaction center protein (473 aa).

Positions 1–14 (MKILYSLRRFYHVE) are excised as a propeptide. T15 carries the N-acetylthreonine modification. T15 bears the Phosphothreonine mark. 5 helical membrane passes run 69–93 (LFEVAHFVPEKPMYEQGLILLPHLA), 134–155 (LLGPETLEESFPFFGYVWKDRN), 178–200 (KALYFGGVYDTWAPGGGDVRKIT), 255–275 (KPFAWARRAFVWSGEAYLSYS), and 291–312 (WFNNTAYPSEFYGPTGPEASQA). E367 serves as a coordination point for [CaMn4O5] cluster. A helical membrane pass occupies residues 447 to 471 (RARAAAAGFEKGIDRDLEPVLFMTP).

This sequence belongs to the PsbB/PsbC family. PsbC subfamily. In terms of assembly, PSII is composed of 1 copy each of membrane proteins PsbA, PsbB, PsbC, PsbD, PsbE, PsbF, PsbH, PsbI, PsbJ, PsbK, PsbL, PsbM, PsbT, PsbX, PsbY, PsbZ, Psb30/Ycf12, at least 3 peripheral proteins of the oxygen-evolving complex and a large number of cofactors. It forms dimeric complexes. Requires Binds multiple chlorophylls and provides some of the ligands for the Ca-4Mn-5O cluster of the oxygen-evolving complex. It may also provide a ligand for a Cl- that is required for oxygen evolution. PSII binds additional chlorophylls, carotenoids and specific lipids. as cofactor.

It is found in the plastid. It localises to the chloroplast thylakoid membrane. One of the components of the core complex of photosystem II (PSII). It binds chlorophyll and helps catalyze the primary light-induced photochemical processes of PSII. PSII is a light-driven water:plastoquinone oxidoreductase, using light energy to abstract electrons from H(2)O, generating O(2) and a proton gradient subsequently used for ATP formation. The sequence is that of Photosystem II CP43 reaction center protein from Lemna minor (Common duckweed).